The following is a 280-amino-acid chain: MNYLYISYEFNFALETILGEVRIRSVWILIGLGLTWFTCYWFSEELIFLLALPFLTLPFDSYFVCTQLTEAFSTFVATSSIACSYFVFPLISYQIWCFLIPSCYGEQRTKYNRFFYLSGSCFFLFLFLTFSWVVPNVWHFLYFVGATSTNSLMIKLQPKIYDYIMLTVRILFISSVCSQVPVIVICLLELRGLSLETFTNNRRFLMVFSLFTAALFTPPDIWCQIVACFLISLIIELAIFVALIVQVREEGWTSGMRESGSIEKKNKSSPPPRTWQSNYQ.

Helical transmembrane passes span 46 to 66 (LIFL…FVCT), 81 to 101 (IACS…FLIP), 114 to 134 (FFYL…SWVV), 137 to 157 (VWHF…IKLQ), 170 to 190 (ILFI…LLEL), and 225 to 245 (IVAC…ALIV). Residues 258-280 (ESGSIEKKNKSSPPPRTWQSNYQ) form a disordered region.

Belongs to the TatC family.

The protein localises to the mitochondrion membrane. This is an uncharacterized protein from Arabidopsis thaliana (Mouse-ear cress).